The following is a 504-amino-acid chain: Putative ribose/galactose/methyl galactoside import ATP-binding protein (504 aa).

2 ABC transporter domains span residues 5–242 (ISVK…GRNL) and 252–497 (TSAN…TRRE). Residue 37–44 (GENGAGKS) coordinates ATP.

It belongs to the ABC transporter superfamily. Carbohydrate importer 2 (CUT2) (TC 3.A.1.2) family.

The protein localises to the cell inner membrane. The catalysed reaction is D-ribose(out) + ATP + H2O = D-ribose(in) + ADP + phosphate + H(+). It carries out the reaction D-galactose(out) + ATP + H2O = D-galactose(in) + ADP + phosphate + H(+). Its function is as follows. Part of an ABC transporter complex involved in carbohydrate import. Could be involved in ribose, galactose and/or methyl galactoside import. Responsible for energy coupling to the transport system. This is Putative ribose/galactose/methyl galactoside import ATP-binding protein from Albidiferax ferrireducens (strain ATCC BAA-621 / DSM 15236 / T118) (Rhodoferax ferrireducens).